Here is a 1362-residue protein sequence, read N- to C-terminus: Bromodomain-containing protein 4B (1362 aa).

Disordered regions lie at residues 22–57 (EGAQMSGQQQPAQPQPQTPMMQTPPPEIARPNQPKR), 200–243 (SLGD…HPPA), 274–367 (LANH…DSKT), 476–639 (DEPE…SYEE), 699–941 (CLRK…TQSP), and 953–1349 (SQAP…MNFQ). A compositionally biased stretch (pro residues) spans 34–49 (QPQPQTPMMQTPPPEI). Residues 57-163 (RQTNQLQYLL…KLFLQKISEM (107 aa)) form the Bromo 1 domain. Pro residues predominate over residues 219–234 (TPTPPAVIRAPTPPQT). The segment covering 326 to 342 (PRKESGRQIRPIKKTEV) has biased composition (basic and acidic residues). Positions 348 to 358 (PAPPDLHPQPA) are enriched in pro residues. Residues 365 to 474 (SKTSEQLRYC…DVFEMRFAKM (110 aa)) form the Bromo 2 domain. The span at 481–503 (APAPVPSPAPGPPAPSIKIPPPT) shows a compositional bias: pro residues. Residues 503–521 (TSSDTSSDSSSDSESSSDS) are NPS region. Over residues 504–516 (SSDTSSDSSSDSE) the composition is skewed to low complexity. The interval 542–597 (QLAALSQPQPNKPKKKEREKRKEKHKRKEEVEETRKGRIREPPAKKPKKSVQVSGG) is BID region. The span at 553-568 (KPKKKEREKRKEKHKR) shows a compositional bias: basic residues. Basic and acidic residues predominate over residues 569-585 (KEEVEETRKGRIREPPA). A compositionally biased stretch (pro residues) spans 606-621 (PPPVTRPARPAPPPAP). The region spanning 623–707 (ESSEEDTQRC…SCLRKKRKPQ (85 aa)) is the NET domain. The span at 628-639 (DTQRCRPMSYEE) shows a compositional bias: basic and acidic residues. Low complexity predominate over residues 722 to 737 (SYSSSESESSSESSTS). Basic residues predominate over residues 750-766 (QKKKGHSGRESRKHHHP). 2 stretches are compositionally biased toward pro residues: residues 772–793 (IAPPPVMKPPSPTLAPSYPPPS) and 871–889 (PARPPSASPPLPPPQPHHQ). Residues 893–905 (HVHHHHHHHHHAQ) are compositionally biased toward basic residues. Residues 926 to 941 (YLQQLHKSQQPPTQSP) are compositionally biased toward polar residues. Low complexity-rich tracts occupy residues 953-963 (SQAPMAAPAQS), 977-1006 (SSASPAPSPASSHIHQMQSPPVVPQQQPAG), 1014-1028 (QQQQQQQQQQHPALQ), and 1041-1050 (HQQAKQQQVI). A C-terminal (CTD) region region spans residues 1061-1361 (RQQKQETYPG…LMEIFEQNLF (301 aa)). A compositionally biased stretch (pro residues) spans 1086 to 1099 (QVPPYPGLTHPPSP). The segment covering 1186-1207 (PEKEKQKQEPKTPVAPKKDLKI) has biased composition (basic and acidic residues). Polar residues predominate over residues 1224–1234 (PTSAGKSTSDS). Residues 1236–1293 (ELFRRQAREKEERERALKHQAEQAERMRREQERMRTREDDDVQDQTRKAHEEARRRQE) show a composition bias toward basic and acidic residues. Over residues 1308–1319 (PAAPSPAQSSQP) the composition is skewed to low complexity. Basic and acidic residues predominate over residues 1322 to 1334 (DQREMARKREQER).

The protein belongs to the BET family.

Its subcellular location is the nucleus. The protein resides in the chromosome. Chromatin reader protein that recognizes and binds acetylated histones and plays a key role in transmission of epigenetic memory across cell divisions and transcription regulation. Remains associated with acetylated chromatin throughout the entire cell cycle and provides epigenetic memory for postmitotic G1 gene transcription by preserving acetylated chromatin status and maintaining high-order chromatin structure. During interphase, plays a key role in regulating the transcription of signal-inducible genes by associating with the P-TEFb complex and recruiting it to promoters. The chain is Bromodomain-containing protein 4B (brd4-b) from Xenopus laevis (African clawed frog).